We begin with the raw amino-acid sequence, 31 residues long: Photosystem I reaction center subunit XII (31 aa).

The chain crosses the membrane as a helical span at residues 7 to 26; the sequence is QIYIALLTALIPAFFALKLG.

It belongs to the PsaM family.

Its subcellular location is the plastid. The protein resides in the chloroplast thylakoid membrane. This is Photosystem I reaction center subunit XII from Euglena mutabilis.